Here is a 258-residue protein sequence, read N- to C-terminus: Coiled-coil domain-containing protein 127 (258 aa).

Positions 50–170 (KEIEKEKEAC…EEALAERQSI (121 aa)) form a coiled coil.

The protein is Coiled-coil domain-containing protein 127 (CCDC127) of Sus scrofa (Pig).